A 770-amino-acid chain; its full sequence is 1,4-alpha-glucan branching enzyme GlgB (770 aa).

The Nucleophile role is filled by Asp437. The active-site Proton donor is the Glu488.

Belongs to the glycosyl hydrolase 13 family. GlgB subfamily. In terms of assembly, monomer.

The catalysed reaction is Transfers a segment of a (1-&gt;4)-alpha-D-glucan chain to a primary hydroxy group in a similar glucan chain.. The protein operates within glycan biosynthesis; glycogen biosynthesis. Its function is as follows. Catalyzes the formation of the alpha-1,6-glucosidic linkages in glycogen by scission of a 1,4-alpha-linked oligosaccharide from growing alpha-1,4-glucan chains and the subsequent attachment of the oligosaccharide to the alpha-1,6 position. The sequence is that of 1,4-alpha-glucan branching enzyme GlgB from Synechococcus sp. (strain JA-3-3Ab) (Cyanobacteria bacterium Yellowstone A-Prime).